The following is a 781-amino-acid chain: Pyrin (781 aa).

In terms of domain architecture, Pyrin spans 1-92 (MAKTPSDHLL…AEELHRAAIQ (92 aa)). A compositionally biased stretch (polar residues) spans 93–111 (EYSTQENGTDDSAASSSLG). Residues 93–226 (EYSTQENGTD…AGGAPGQKEC (134 aa)) form a disordered region. Basic and acidic residues predominate over residues 113–126 (NKPRSLKTPDHPEG). Residues 153–163 (LSRKPLSKRRE) show a composition bias toward basic residues. Ser242 is modified (phosphoserine). Positions 266–280 (KTAANLDSATEPRAR) are interaction with RELA. Disordered stretches follow at residues 270-322 (NLDS…EGDP) and 336-373 (EAVS…QPLP). The B box-type zinc-finger motif lies at 370-412 (QPLPQCKRHLKQVQLLFCEDHDEPICLICSLSQEHQGHRVRPI). Positions 413–442 (EEVALEHKKKIQKQLEHLKKLRKSGEEQRS) form a coiled coil. The Nuclear localization signal motif lies at 420 to 437 (KKKIQKQLEHLKKLRKSG). A required for homotrimerization and induction of pyroptosomes region spans residues 420-582 (KKKIQKQLEH…YFSETLRSEM (163 aa)). Residues 580–775 (SEMEMFNVPE…NTAPLTICPV (196 aa)) enclose the B30.2/SPRY domain.

In terms of assembly, homotrimer. Interacts (via the B box-type zinc finger) with PSTPIP1. Interacts (via the B30.2/SPRY domain) with several components of the inflammasome complex, including CASP1 p20 and p10 subunits, CASP5, PYCARD, NLRP1, NLRP2 and NLRP3, as well as with unprocessed IL1B; this interaction may lead to autophagic degradation of these proteins. Component of the AIM2 PANoptosome complex, a multiprotein complex that drives inflammatory cell death (PANoptosis). Interacts with NFKBIA and RELA. Interacts weakly with VASP and ACTR3. Interacts with active ULK1 (phosphorylated on 'Ser-317') and BECN1 simultaneously. Also interacts with ATG16L1 (via WD repeats), and with ATG8 family members, including GABARAP, GABARAPL1 and, to a lesser extent, GABARAPL2, MAP1LC3A/LC3A and MAP1LC3C/LC3C. Interacts with TRIM21. Interacts with YWHAB, YWHAE, YWHAG, YWHAH, YWHAQ and YWHAZ; the interaction is required for the down-regulation of pyrin pro-inflammatory activity. Post-translationally, cleaved by CASP1. The N-terminal cleavage product localizes to the nucleus as a filamentous network and to the cytoplasm, interacts more strongly with RELA and NFKBIA than the full-length protein, enhances the nuclear localization of RELA and induces NFKBIA proteolysis. The C-terminal cleavage product localizes to the cytoplasm. In terms of processing, phosphorylation at Ser-242 is required for the interaction with 14-3-3 proteins and down-regulation of pyrin pro-inflammatory activity. Degraded along with the delivery of its substrates to autolysosomal compartments (at protein level). In terms of tissue distribution, expressed in peripheral blood leukocytes, particularly in mature granulocytes and to a lesser extent in monocytes but not in lymphocytes. Detected in spleen, lung and muscle, probably as a result of leukocyte infiltration in these tissues. Not expressed in thymus, prostate, testis, ovary, small intestine, colon, heart, brain, placenta, liver, kidney, pancreas. Expression detected in several myeloid leukemic, colon cancer, and prostate cancer cell lines.

The protein resides in the cytoplasm. The protein localises to the cytoskeleton. Its subcellular location is the cell projection. It is found in the ruffle. It localises to the lamellipodium. The protein resides in the nucleus. The protein localises to the cytoplasmic vesicle. Its subcellular location is the autophagosome. Functionally, involved in the regulation of innate immunity and the inflammatory response in response to IFNG/IFN-gamma. Organizes autophagic machinery by serving as a platform for the assembly of ULK1, Beclin 1/BECN1, ATG16L1, and ATG8 family members and recognizes specific autophagy targets, thus coordinating target recognition with assembly of the autophagic apparatus and initiation of autophagy. Acts as an autophagy receptor for the degradation of several inflammasome components, including CASP1, NLRP1 and NLRP3, hence preventing excessive IL1B- and IL18-mediated inflammation. However, it can also have a positive effect in the inflammatory pathway, acting as an innate immune sensor that triggers PYCARD/ASC specks formation, caspase-1 activation, and IL1B and IL18 production. Together with AIM2, also acts as a mediator of pyroptosis, necroptosis and apoptosis (PANoptosis), an integral part of host defense against pathogens, in response to bacterial infection. It is required for PSTPIP1-induced PYCARD/ASC oligomerization and inflammasome formation. Recruits PSTPIP1 to inflammasomes, and is required for PSTPIP1 oligomerization. The sequence is that of Pyrin from Homo sapiens (Human).